Here is a 183-residue protein sequence, read N- to C-terminus: UPF0340 protein LCA_1354 (183 aa).

This sequence belongs to the UPF0340 family.

This chain is UPF0340 protein LCA_1354, found in Latilactobacillus sakei subsp. sakei (strain 23K) (Lactobacillus sakei subsp. sakei).